A 96-amino-acid polypeptide reads, in one-letter code: Putative pterin-4-alpha-carbinolamine dehydratase (96 aa).

It belongs to the pterin-4-alpha-carbinolamine dehydratase family.

The catalysed reaction is (4aS,6R)-4a-hydroxy-L-erythro-5,6,7,8-tetrahydrobiopterin = (6R)-L-erythro-6,7-dihydrobiopterin + H2O. The protein is Putative pterin-4-alpha-carbinolamine dehydratase of Prochlorococcus marinus (strain MIT 9515).